A 589-amino-acid chain; its full sequence is Transmembrane 9 superfamily member 3 (589 aa).

An N-terminal signal peptide occupies residues 1–28 (MRPLPGALGVAAAAALWLLLLLLPRTRA). Asparagine 174 carries N-linked (GlcNAc...) asparagine glycosylation. A run of 5 helical transmembrane segments spans residues 224–244 (FSIF…SMIL), 294–314 (LIGS…VAMI), 328–348 (AIFV…SLYA), 360–380 (FIGA…INFI), and 389–409 (AIPF…ILPL). Asparagine 419 is a glycosylation site (N-linked (GlcNAc...) asparagine). 4 helical membrane-spanning segments follow: residues 449-469 (IVCL…YFIF), 482-502 (GFMM…TIVC), 519-539 (FLSA…YYFF), and 551-571 (FYFG…GAIG).

The protein belongs to the nonaspanin (TM9SF) (TC 9.A.2) family.

The protein resides in the membrane. This Homo sapiens (Human) protein is Transmembrane 9 superfamily member 3 (TM9SF3).